The chain runs to 446 residues: Transcription factor Sox-10 (446 aa).

Disordered regions lie at residues 1-60, 153-191, and 203-264; these read MSDD…SEDE, RLRM…AEGG, and HLDH…IDFG. A compositionally biased stretch (acidic residues) spans 36–48; the sequence is DDDDDDDEEEEEE. K52 participates in a covalent cross-link: Glycyl lysine isopeptide (Lys-Gly) (interchain with G-Cter in SUMO). Residues 56 to 96 are dimerization (DIM); it reads DSEDERFPVCIREAVSQVLNGYDWTLVPMPVRVNGGSKSKP. A DNA-binding region (HMG box) is located at residues 98 to 166; that stretch reads VKRPMNAFMV…QHKKDHPDYK (69 aa). The span at 153–167 shows a compositional bias: basic and acidic residues; it reads RLRMQHKKDHPDYKY. Residues 213-226 are compositionally biased toward polar residues; sequence SDGNSEHSTGQSHG. The interval 217–303 is transactivation domain (TAM); sequence SEHSTGQSHG…NGHAGHPSHI (87 aa). A compositionally biased stretch (basic and acidic residues) spans 243-257; sequence SDGKRDGSHALREGG. The transactivation domain (TAC) stretch occupies residues 337–446; it reads KAQVKTESSS…QPVYTTLSRP (110 aa). A Glycyl lysine isopeptide (Lys-Gly) (interchain with G-Cter in SUMO) cross-link involves residue K341. The interval 421–446 is disordered; the sequence is SDPPSVAQSHSPTHWEQPVYTTLSRP. The span at 426-446 shows a compositional bias: polar residues; the sequence is VAQSHSPTHWEQPVYTTLSRP.

As to quaternary structure, interacts with the sumoylation factors ube2i/ubc9 and sumo1. Sumoylated. In terms of tissue distribution, first expressed at stages 13/14 at the lateral edges of the neural plate, in the neural crest forming region. By stage 22, neural crest cells migrate in the cranial region and strong expression is seen in the crest cells that populate the branchial arches as well as those migrating in the frontonasal region. Also strongly expressed in the trunk neural crest. Expression in the otic vesicle begins around stage 25 and persists until at least stage 40. At stage 30, expression is down-regulated in the cranial neural crest of the pharyngeal arches but persists in the trunk neural crest, in the otic vesicle and in discrete domains adjacent to the hindbrain. At stage 40, expression is restricted to the otic vesicle, differentiated pigment cells, and in several cranial ganglia.

Its subcellular location is the cytoplasm. It is found in the nucleus. In terms of biological role, acts early in neural crest formation, functioning redundantly with the other group E Sox factors sox8 and sox9 to induce neural crest progenitors. Acts downstream of wnt-signaling at the neural plate border. Involved in the specification of neural crest progenitors fated to form the pigment cell lineage. The protein is Transcription factor Sox-10 (sox10) of Xenopus laevis (African clawed frog).